Here is a 1439-residue protein sequence, read N- to C-terminus: MVSKRKLSKIDAAEESSKTDLQSRCPETKRSRISDKRAPSQGGLENEGVFEELLRTSGIILKVGEGQNEIAVDQTAFQKKLRVALEKHPSYPGVVNEFISGLESHIKDRSQFKNCLLPCTPARTEGSRTLVHSYCESLIKLLLGIKILQPAVVTLLLEKIPEFFFDVVGTFGTNFPRLIVNQFKWLDGLLDSQDLVKKLMQMLSVSPVPIQHDIITSLPEILEDSQQNEVARELSCLLKQGRRLTVPILDALSRLDLDAELLAEVRQSAMTIVPSVKLEDLPVVIKFILHNVKAADAVEVISDLRKSLDLSSCVLPLQLLGSQRKLKSQAQASSSMSQVTTSQNCVKLLFDVIKQAVRFQKDVSEAWIKAIENSTSVSDHKVLDLIVLLLIHSTNSKNRKQTEKVLRSKIRLGCMPEQLMQNAFQNHSMVIKDFFPSILSLAQTFLHSAHPAVVSFGSCMYKQAFAVFDSYCQQEVVCALVTHVCSGNETELDISLDVLTDLVILHPSLLLRYATFVKTILDSMQKLNPCQIRKLFYILSTLAFSQRQEGSYIQDDMHMVIRKWLSSSVPNHKQMGIIGAVTMMGSVALKRNEADGGLLERPELSIECDGQLSTLLDLVGFCCEQTPEVLALYYDELANLIEKQKGNLDLQLLDKFGKSLVEDFPNDFVVDLSPTVDGSFLFPVKSLYNLDEDETQGAIAINLLPLVSQSEPGRVADEMSNSRKRVVSPICLSPCFRLLRLYTGEQNNGSLEEIDALLGCPLYLTDLEVEGKLDSLSKQEREFLCSLLFYALNWFREVVNAFCQQQDAEMKGKVLTRLQNITELQNVLGKCLAATPGYVPPPATFDSEAPEGVPSINAGGPVRKKNGKKRKSDSSKACSAERTQADESSDGNQPDTELSELEKSATEKETGNPLAQLQSYRPYFRELDLEVFSVLHCGLLTKSILDTEMHTEASEVVQLGPAELCFLLDDMCWKLEHVLTPGSTRRVPFLKERGNKDVGFSHLCQRSPKEVAVCVVKLLKPLCNHMENMHNYFQTVIPNQGVVDESGLNIQEYQLMSSCYHQLLLAFRLLFAWSGFSQHENSNLLRSALQVLADRLKPGETEFLPLEELISESFQYLLNFQASIPSFQCAFILTQVLMAISEKPMTGWKREKMASLAKQFLCQSWMKPGGDREKGSHFNSALHTLLCVYLEHTDNILKAIEEISSVGVPELINSAKDGCSSTYPTLSRQTFPVFFRVMMAQLESSVKSIPAGKPSDSGEVQLEKLLKWNIAVRNFHILINLVKVFDSRPVLSICLKYGRLFVEAFLKLAMPLLDHSFKKHRDDVQSLLKTLQLSTRQLHHMCGHSKIHQDLGLTNHVPLLKKSLEQFVYRVKAMLAFNHCQEAFWVGVLKNRDLQGEEILSQASAAPEEDSAEGSEEDTADSAAEEPDGTDSDSGGAGR.

Residue Lys563 forms a Glycyl lysine isopeptide (Lys-Gly) (interchain with G-Cter in ubiquitin) linkage.

Belongs to the Fanconi anemia protein FANCD2 family. Homodimer; cannot be ubiquitinated and does not bind DNA. Part of a FANCI-FANCD2 heterodimeric complex that binds and scans dsDNA for DNA damage. Interacts directly with FANCE and FANCI. Interacts with USP1 and MEN1. The ubiquitinated form specifically interacts with BRCA1 and BLM. Both the nonubiquitinated and the monoubiquitinated forms interact with BRCA2; this interaction is mediated by phosphorylated FANCG and the complex also includes XCCR3. The ubiquitinated form specifically interacts with MTMR15/FAN1 (via UBZ-type zinc finger), leading to recruit MTMR15/FAN1 to sites of DNA damage. Interacts with DCLRE1B/Apollo. Interacts with POLN. Interacts with UHRF1 and UHRF2; these interactions promote FANCD2 activation. Post-translationally, monoubiquitinated on Lys-563 during S phase and upon genotoxic stress. Deubiquitinated by USP1 as cells enter G2/M, or once DNA repair is completed. Monoubiquitination prevents DNA release from the FANCI-FANCD2 complex. FANCD2 is only ubiquitinated in the FANCI-FANCD2 complex and the monoubiquitination of FANCD2 is promoted by phosphorylation of FANCI. Phosphorylated in response to various genotoxic stresses by ATM and/or ATR.

It localises to the nucleus. In terms of biological role, required for maintenance of chromosomal stability. Promotes accurate and efficient pairing of homologs during meiosis. Involved in the repair of DNA double-strand breaks, both by homologous recombination and single-strand annealing. The FANCI-FANCD2 complex binds and scans double-stranded DNA (dsDNA) for DNA damage; this complex stalls at DNA junctions between double-stranded DNA and single-stranded DNA. May participate in S phase and G2 phase checkpoint activation upon DNA damage. Plays a role in preventing breakage and loss of missegregating chromatin at the end of cell division, particularly after replication stress. Required for the targeting, or stabilization, of BLM to non-centromeric abnormal structures induced by replicative stress. Promotes BRCA2/FANCD1 loading onto damaged chromatin. May also be involved in B-cell immunoglobulin isotype switching. The chain is Fanconi anemia group D2 protein from Gallus gallus (Chicken).